We begin with the raw amino-acid sequence, 321 residues long: Calcium-binding protein LPS1-alpha (321 aa).

EF-hand domains lie at 15-49 (DAIE…NWTE), 47-82 (WTEE…STKE), 85-120 (YSSD…IYTK), 121-156 (VVDG…KLPI), 165-200 (EYRE…STKY), 200-233 (YSDK…DGVS), 232-267 (VSKD…IYRQ), and 269-304 (VDFE…NCPY). Residues Asp-29, Asn-31, Asp-33, Thr-35, Glu-40, Asp-60, Asn-62, Asp-64, His-66, Glu-71, Asp-98, Asp-100, Asn-102, Arg-104, Glu-109, Asp-134, Asp-136, Asp-138, His-140, Glu-145, Asp-178, Asn-180, Asp-182, Ser-184, Glu-189, Asp-213, Asn-215, Asp-217, Arg-219, Glu-224, Asp-245, Asp-247, Asn-249, Lys-251, Glu-256, Asp-284, Asp-286, Tyr-288, and Glu-293 each contribute to the Ca(2+) site.

Aboral ectoderm, a squamous epithelium covering the surface of the late stage embryo and larva.

Functionally, calcium-binding protein involved in larval development and metamorphosis. Likely to function as calcium buffers mediating the transport of calcium from the sea water to the blastocoel where calcium is required for skeleton formation. This is Calcium-binding protein LPS1-alpha from Lytechinus pictus (Painted sea urchin).